The primary structure comprises 575 residues: MFGIQDTLGRGPTLKEKSLGAEMDSVRSWVRNVGVVDANVAAQSGVALSRAHFEKQPPSNLRKSNFFHFVLALYDRQGQPVEIERTAFVDFVENDKEQGNEKTNNGTHYKLQLLYSNGVRTEQDLYVRLIDSVTKQPIAYEGQNKNPEMCRVLLTHEVMCSRCCEKKSCGNRNETPSDPVIIDRFFLKFFLKCNQNCLKTAGNPRDMRRFQVVLSTTVNVDGHVLAVSDNMFVHNNSKHGRRARRLDPSEATPCIKAISPSEGWTTGGAMVIIIGDNFFDGLQVVFGTMLVWSELITPHAIRVQTPPRHIPGVVEVTLSYKSKQFCKGAPGRFIYTALNEPTIDYGFQRLQKVIPRHPGDPERLAKEMLLKRAADLVEALYGTPHNNQDIILKRAADIAEALYSVPRNPSQLPALSSSPAHSGMMGINSYGSQLGVSISESTQGNNQGYIRNTSSISPRGYSSSSTPQQSNYSTSSNSMNGYSNVPMANLGVPGSPGFLNGSPTGSPYGIMSSSPTVGSSSTSSILPFSSSVFPAVKQKSAFAPVIRPQGSPSPACSSGNGNGFRAMTGLVVPPM.

Positions 62–65 are interaction with DNA; sequence RKSN. The C5-type zinc-finger motif lies at 150–169; sequence CRVLLTHEVMCSRCCEKKSC. Interaction with DNA regions lie at residues 196 to 203 and 235 to 238; these read NCLKTAGN and NNSK. Residues 253 to 336 enclose the IPT/TIG domain; the sequence is PCIKAISPSE…KGAPGRFIYT (84 aa). Residues 441–453 show a composition bias toward polar residues; it reads STQGNNQGYIRNT. A disordered region spans residues 441-479; that stretch reads STQGNNQGYIRNTSSISPRGYSSSSTPQQSNYSTSSNSM. The span at 454–479 shows a compositional bias: low complexity; sequence SSISPRGYSSSSTPQQSNYSTSSNSM.

This sequence belongs to the COE family. Forms either a homodimer or a heterodimer with a related family member. Interacts with SIX1.

It is found in the nucleus. Transcription factor that, in osteoblasts, activates the decoy receptor for RANKL, TNFRSF11B, which in turn regulates osteoclast differentiation. Acts in synergy with the Wnt-responsive LEF1/CTNNB1 pathway. Recognizes variations of the palindromic sequence 5'-ATTCCCNNGGGAATT-3'. This chain is Transcription factor COE2 (EBF2), found in Homo sapiens (Human).